Consider the following 374-residue polypeptide: Tetraacyldisaccharide 4'-kinase (374 aa).

59–66 (TAGGTGKT) is a binding site for ATP.

Belongs to the LpxK family.

The catalysed reaction is a lipid A disaccharide + ATP = a lipid IVA + ADP + H(+). It functions in the pathway glycolipid biosynthesis; lipid IV(A) biosynthesis; lipid IV(A) from (3R)-3-hydroxytetradecanoyl-[acyl-carrier-protein] and UDP-N-acetyl-alpha-D-glucosamine: step 6/6. Transfers the gamma-phosphate of ATP to the 4'-position of a tetraacyldisaccharide 1-phosphate intermediate (termed DS-1-P) to form tetraacyldisaccharide 1,4'-bis-phosphate (lipid IVA). The polypeptide is Tetraacyldisaccharide 4'-kinase (Elusimicrobium minutum (strain Pei191)).